The chain runs to 89 residues: MIRLETILTPGRSLVNVPGGSKKRALEKVATVIADQVPELEMQDVFEKLVAREKLGSTGFGNGIAIPHCRLEGSSAPVSALLHLEAPID.

In terms of domain architecture, PTS EIIA type-2 spans Thr6–Asp89. His68 functions as the Tele-phosphohistidine intermediate in the catalytic mechanism.

The protein resides in the cytoplasm. Functionally, seems to have a role in regulating nitrogen assimilation. The chain is Nitrogen regulatory protein (ptsN) from Pseudomonas putida (Arthrobacter siderocapsulatus).